A 183-amino-acid chain; its full sequence is Protein vem-1 (183 aa).

Residues 9–29 (FTMYDAVFLVVVLGFFFYWLT) traverse the membrane as a helical segment. The Cytochrome b5 heme-binding domain maps to 47-146 (MSDMTVEELR…FKYLTVGRLV (100 aa)).

The protein belongs to the cytochrome b5 family. MAPR subfamily. As to quaternary structure, interacts with unc-40 (via cytoplasmic domain). As to expression, expressed in the AVG pioneer midline neuron and in several nerve ring neurons that extend projecting axons into the right ventral nerve cord.

Its subcellular location is the membrane. The protein resides in the cell projection. The protein localises to the axon. Functionally, transmembrane protein required for the axon guidance of a subset of ventral nerve cord-associated interneurons and motor neurons. May function with the netrin receptor unc-40 in axon guidance. This chain is Protein vem-1, found in Caenorhabditis elegans.